We begin with the raw amino-acid sequence, 271 residues long: Putative hydro-lyase OCAR_7359/OCA5_c07590 (271 aa).

It belongs to the D-glutamate cyclase family.

The chain is Putative hydro-lyase OCAR_7359/OCA5_c07590 from Afipia carboxidovorans (strain ATCC 49405 / DSM 1227 / KCTC 32145 / OM5) (Oligotropha carboxidovorans).